A 161-amino-acid polypeptide reads, in one-letter code: MPSFDVVSELDKHEVTNAVENAVKELDRRYDLKGKGSFEFKEKELTVNLTAEADFQLEAMIEILKLSLVKRKIDAQCLEIKDAYASGKLMKQEAVLKEGIDKELAKKIVAHVKDAKLKVQAAIQGEQVRITGKKRDDLQEAIAALRAKTFDMPLQFNNFRD.

Belongs to the YajQ family.

Functionally, nucleotide-binding protein. The sequence is that of Nucleotide-binding protein PFLU_4927 from Pseudomonas fluorescens (strain SBW25).